Reading from the N-terminus, the 263-residue chain is HTH-type transcriptional repressor NanR (263 aa).

Residues 1–22 (MGLMNAFDSQTEDSSPAIGRNL) are disordered. The HTH gntR-type domain occupies 30–98 (KKLSEMVEEE…NGERARVSRP (69 aa)). The segment at residues 58–77 (ERELMAFFNVGRPSVREALA) is a DNA-binding region (H-T-H motif).

This sequence belongs to the NanR family.

Transcriptional repressor that controls expression of the genes required for the catabolism of sialic acids. In Shigella dysenteriae serotype 1 (strain Sd197), this protein is HTH-type transcriptional repressor NanR.